The following is a 3974-amino-acid chain: Hybrid PKS-NRPS synthetase 1 (3974 aa).

In terms of domain architecture, Ketosynthase family 3 (KS3) spans 5–442; the sequence is SQKIAIIGSA…GTNAHCLIES (438 aa). Active-site for beta-ketoacyl synthase activity residues include Cys179, His316, and His362. The malonyl-CoA:ACP transacylase (MAT) domain stretch occupies residues 561-883; the sequence is IFTGQGAQWA…TGILERGLDD (323 aa). Residues 954–1079 are N-terminal hotdog fold; sequence HPLLGSRLSA…HDSELGIPES (126 aa). A dehydratase (DH) domain region spans residues 954–1251; the sequence is HPLLGSRLSA…QVESVKLVPV (298 aa). The PKS/mFAS DH domain maps to 954 to 1257; that stretch reads HPLLGSRLSA…LVPVITPDAS (304 aa). The active-site Proton acceptor; for dehydratase activity is His986. Positions 1107 to 1257 are C-terminal hotdog fold; it reads TTPISSAKIY…LVPVITPDAS (151 aa). Asp1165 (proton donor; for dehydratase activity) is an active-site residue. The interval 1398–1529 is methyltransferase (MT) domain; the sequence is PWNTELRNAI…GYLLLVAKTG (132 aa). The interval 2108–2282 is ketoreductase (KR) domain; that stretch reads TYFLAGMTDS…ASIMDTGVVT (175 aa). Positions 2492–2516 are disordered; that stretch reads AGRSASPGASCSDRSLSTRSDETRS. Residues 2498-2509 show a composition bias toward polar residues; it reads PGASCSDRSLST. The tract at residues 2560–2994 is condensation (C) domain; the sequence is APLSPGQAQL…LERLRTSSDQ (435 aa). An adenylation (A) (KR) domain region spans residues 3021 to 3423; that stretch reads DAMAEKYFDQ…DGSLILLGRM (403 aa). Positions 3537–3613 constitute a Carrier domain; it reads SADQLVEAEV…EMAEKMASVR (77 aa). Ser3573 is modified (O-(pantetheine 4'-phosphoryl)serine). Positions 3657-3940 are reductase (RED) domain; it reads VVLTGAADLL…KLEMGEWIAL (284 aa).

This sequence in the C-terminal section; belongs to the NRP synthetase family.

It functions in the pathway secondary metabolite biosynthesis. In terms of biological role, hybrid PKS-NRPS synthetase; part of the hps1-dma1 gene cluster that probably mediates the biosynthesis a derivative of cyclopiazonic acid (CPA). The hybrid polyketide synthase-nonribosomal peptide synthetase (PKS-NRPS) nps1 might incorporates acetyl-CoA, malonyl-CoA, and tryptophan (Trp) and utilizes a C-terminal redox-incompetent reductase domain to make and release the tryptophan tetramic acid, cyclo-acetoacetyl-L-tryptophan (c-AATrp), as the first intermediate in the pathway. In addition, the cluster also includes the tryptophan dimethylallyltransferase dma1, the FAD-dependent oxidoreductase toxD, the cytochrome P450 monooxygenase cyp3.1 and the methyltransferase DOTSEDRAFT_139328; the latter 2 being not present in all CPA-producing fungi but involved in additional modifications that occur in biosynthesis the of a range of CPA and CPA-like products. Further studies are required to clarify whether the CPA-like hps1-dma1 cluster is functional or a non-functional relic reflecting evolution of D.septosporum. In Dothistroma septosporum (strain NZE10 / CBS 128990) (Red band needle blight fungus), this protein is Hybrid PKS-NRPS synthetase 1.